The sequence spans 295 residues: Small ribosomal subunit protein uS2 (295 aa).

The tract at residues 232 to 295 is disordered; sequence RRRGTDEKPE…DEQPAAAAAE (64 aa). Positions 252–287 are enriched in basic and acidic residues; sequence EWERELLEEPKKSDEQPAKSDELPVKTDEQPTKSDE.

The protein belongs to the universal ribosomal protein uS2 family.

The protein is Small ribosomal subunit protein uS2 of Salinispora tropica (strain ATCC BAA-916 / DSM 44818 / JCM 13857 / NBRC 105044 / CNB-440).